The following is a 331-amino-acid chain: MGSDRTLKKQKMSVLQELKKITTIVADTGDFEAINIYKPTDATTNPSLILSASSMERYQPLVQKAVEYAKGKKGSVSEQVAEAMDYLCVLFGTEILKVVPGRVSTEIDARLSFDTKKSVEKALKLIALYKSLGVDKERILIKLASTWEGIKAAEILENEHGVHCNLTLLFSFAQAVACAEAGVTLISPFVGRILDWYVANTDTKKFEALKDPGVISVTNIYNYYKKFGYKTLVMGASFRNVGEIKALAGCDLLTISPALLKELENETESVVTYLSVSNAKLQDIEKITVDESRFRWLLNEDAMATDKLSEGIRKFAVDTVKLENLIKTYLK.

The active-site Schiff-base intermediate with substrate is Lys142.

Belongs to the transaldolase family. Type 1 subfamily. As to quaternary structure, homodimer.

The protein resides in the cytoplasm. It carries out the reaction D-sedoheptulose 7-phosphate + D-glyceraldehyde 3-phosphate = D-erythrose 4-phosphate + beta-D-fructose 6-phosphate. Its pathway is carbohydrate degradation; pentose phosphate pathway; D-glyceraldehyde 3-phosphate and beta-D-fructose 6-phosphate from D-ribose 5-phosphate and D-xylulose 5-phosphate (non-oxidative stage): step 2/3. In terms of biological role, transaldolase is important for the balance of metabolites in the pentose-phosphate pathway. The sequence is that of Probable transaldolase from Drosophila melanogaster (Fruit fly).